Reading from the N-terminus, the 201-residue chain is Recombination protein RecR (201 aa).

Residues 57–72 form a C4-type zinc finger; that stretch reads CKYCRTFTEQEQCTIC. The Toprim domain occupies 81 to 176; that stretch reads GQICVVESPA…TASRIAHGVP (96 aa).

Belongs to the RecR family.

In terms of biological role, may play a role in DNA repair. It seems to be involved in an RecBC-independent recombinational process of DNA repair. It may act with RecF and RecO. The polypeptide is Recombination protein RecR (Photorhabdus laumondii subsp. laumondii (strain DSM 15139 / CIP 105565 / TT01) (Photorhabdus luminescens subsp. laumondii)).